Consider the following 181-residue polypeptide: ATP synthase subunit delta (181 aa).

Belongs to the ATPase delta chain family. F-type ATPases have 2 components, F(1) - the catalytic core - and F(0) - the membrane proton channel. F(1) has five subunits: alpha(3), beta(3), gamma(1), delta(1), epsilon(1). F(0) has three main subunits: a(1), b(2) and c(10-14). The alpha and beta chains form an alternating ring which encloses part of the gamma chain. F(1) is attached to F(0) by a central stalk formed by the gamma and epsilon chains, while a peripheral stalk is formed by the delta and b chains.

It localises to the cell inner membrane. Functionally, f(1)F(0) ATP synthase produces ATP from ADP in the presence of a proton or sodium gradient. F-type ATPases consist of two structural domains, F(1) containing the extramembraneous catalytic core and F(0) containing the membrane proton channel, linked together by a central stalk and a peripheral stalk. During catalysis, ATP synthesis in the catalytic domain of F(1) is coupled via a rotary mechanism of the central stalk subunits to proton translocation. In terms of biological role, this protein is part of the stalk that links CF(0) to CF(1). It either transmits conformational changes from CF(0) to CF(1) or is implicated in proton conduction. This is ATP synthase subunit delta from Chlorobium limicola (strain DSM 245 / NBRC 103803 / 6330).